A 589-amino-acid polypeptide reads, in one-letter code: ATP-dependent lipid A-core flippase (589 aa).

The next 6 helical transmembrane spans lie at 37–57 (ALAI…PALL), 72–92 (LWLV…SGFL), 151–171 (IMKL…LVYL), 173–193 (WKLM…IQVL), 260–280 (SAIT…IALL), and 286–306 (TTTV…IAPV). In terms of domain architecture, ABC transmembrane type-1 spans 37 to 318 (ALAIGATIVA…LSDAATPVTR (282 aa)). Positions 350-584 (IEFADVSVIY…NGAYAHLYRL (235 aa)) constitute an ABC transporter domain. 384-391 (GASGSGKT) is a binding site for ATP.

This sequence belongs to the ABC transporter superfamily. Lipid exporter (TC 3.A.1.106) family. As to quaternary structure, homodimer.

The protein resides in the cell inner membrane. It carries out the reaction ATP + H2O + lipid A-core oligosaccharideSide 1 = ADP + phosphate + lipid A-core oligosaccharideSide 2.. In terms of biological role, involved in lipopolysaccharide (LPS) biosynthesis. Translocates lipid A-core from the inner to the outer leaflet of the inner membrane. Transmembrane domains (TMD) form a pore in the inner membrane and the ATP-binding domain (NBD) is responsible for energy generation. The protein is ATP-dependent lipid A-core flippase of Polaromonas sp. (strain JS666 / ATCC BAA-500).